The chain runs to 663 residues: Leishmanolysin-like peptidase (663 aa).

His246 contributes to the Zn(2+) binding site. Glu247 is a catalytic residue. 2 residues coordinate Zn(2+): His250 and His353.

This sequence belongs to the peptidase M8 family. The cofactor is Zn(2+).

The protein localises to the cytoplasm. Its function is as follows. Metalloprotease. The sequence is that of Leishmanolysin-like peptidase from Caenorhabditis briggsae.